Here is a 238-residue protein sequence, read N- to C-terminus: 2-C-methyl-D-erythritol 4-phosphate cytidylyltransferase (238 aa).

The protein belongs to the IspD/TarI cytidylyltransferase family. IspD subfamily.

The enzyme catalyses 2-C-methyl-D-erythritol 4-phosphate + CTP + H(+) = 4-CDP-2-C-methyl-D-erythritol + diphosphate. Its pathway is isoprenoid biosynthesis; isopentenyl diphosphate biosynthesis via DXP pathway; isopentenyl diphosphate from 1-deoxy-D-xylulose 5-phosphate: step 2/6. In terms of biological role, catalyzes the formation of 4-diphosphocytidyl-2-C-methyl-D-erythritol from CTP and 2-C-methyl-D-erythritol 4-phosphate (MEP). This chain is 2-C-methyl-D-erythritol 4-phosphate cytidylyltransferase, found in Salinibacter ruber (strain DSM 13855 / M31).